The chain runs to 986 residues: Leucine-rich repeat receptor-like kinase protein HAR1 (986 aa).

The signal sequence occupies residues methionine 1–serine 25. LRR repeat units lie at residues aspartate 71–leucine 97, glutamate 98–leucine 121, serine 123–glycine 145, methionine 146–leucine 170, glutamate 171–serine 196, glutamate 198–leucine 218, methionine 243–leucine 267, threonine 268–methionine 291, serine 293–lysine 314, lysine 316–leucine 339, proline 340–asparagine 363, arginine 365–serine 387, glycine 388–cysteine 411, arginine 412–leucine 435, serine 437–glycine 458, glutamate 459–leucine 482, arginine 483–isoleucine 506, methionine 508–arginine 530, alanine 531–leucine 554, methionine 555–methionine 578, and threonine 579–valine 603. N-linked (GlcNAc...) asparagine glycosylation is found at asparagine 80, asparagine 102, asparagine 109, asparagine 128, and asparagine 141. Residues asparagine 255, asparagine 266, and asparagine 279 are each glycosylated (N-linked (GlcNAc...) asparagine). 2 N-linked (GlcNAc...) asparagine glycosylation sites follow: asparagine 317 and asparagine 351. 2 N-linked (GlcNAc...) asparagine glycosylation sites follow: asparagine 513 and asparagine 518. Residues asparagine 561 and asparagine 590 are each glycosylated (N-linked (GlcNAc...) asparagine). Residues isoleucine 645 to valine 665 form a helical membrane-spanning segment. Residues leucine 695–threonine 971 form the Protein kinase domain. ATP-binding positions include isoleucine 701 to valine 709 and lysine 723. Residue aspartate 820 is the Proton acceptor of the active site.

Belongs to the protein kinase superfamily. Ser/Thr protein kinase family. As to expression, expressed in roots, leaves, stems and flowers.

It localises to the cell membrane. It catalyses the reaction L-seryl-[protein] + ATP = O-phospho-L-seryl-[protein] + ADP + H(+). The catalysed reaction is L-threonyl-[protein] + ATP = O-phospho-L-threonyl-[protein] + ADP + H(+). Its function is as follows. LRR receptor kinase involved in the regulation of root and shoot growth, and root nodule organogenesis. Involved in long distance nodulation signaling events. Involved in the autoregulation of nodulation (AON), a long distance systemic signaling from root to shoot and back again, which allows legumes to limit the number of root nodules formed based on available nitrogen and previous rhizobial colonization. Acts from shoot to root to control AON. Involved in the regulation of root colonization by arbuscular mycorrhizal (AM) fungi. The sequence is that of Leucine-rich repeat receptor-like kinase protein HAR1 from Lotus japonicus (Lotus corniculatus var. japonicus).